The sequence spans 258 residues: Type III pantothenate kinase 1 (258 aa).

6–13 is a binding site for ATP; the sequence is DMGNSHIH. Residue 107–110 participates in substrate binding; it reads GADR. Residue aspartate 109 is the Proton acceptor of the active site. Aspartate 130 lines the K(+) pocket. Threonine 133 is an ATP binding site. Substrate is bound at residue threonine 185.

It belongs to the type III pantothenate kinase family. In terms of assembly, homodimer. It depends on NH4(+) as a cofactor. Requires K(+) as cofactor.

It is found in the cytoplasm. The catalysed reaction is (R)-pantothenate + ATP = (R)-4'-phosphopantothenate + ADP + H(+). It participates in cofactor biosynthesis; coenzyme A biosynthesis; CoA from (R)-pantothenate: step 1/5. In terms of biological role, catalyzes the phosphorylation of pantothenate (Pan), the first step in CoA biosynthesis. This Francisella tularensis subsp. tularensis (strain FSC 198) protein is Type III pantothenate kinase 1.